A 596-amino-acid chain; its full sequence is Potassium-transporting ATPase potassium-binding subunit (596 aa).

10 helical membrane-spanning segments follow: residues 6-26, 67-87, 136-156, 177-197, 283-303, 314-334, 413-433, 450-470, 518-538, and 560-580; these read ILTI…LGGF, AIGL…LQLF, GLTT…IALI, ITLY…VGQG, LSNF…CFTF, WVVL…AVHF, GLYG…LMIG, MVAI…AIAV, MLAI…LALA, and LFIV…YVPA.

Belongs to the KdpA family. In terms of assembly, the system is composed of three essential subunits: KdpA, KdpB and KdpC.

The protein resides in the cell inner membrane. In terms of biological role, part of the high-affinity ATP-driven potassium transport (or Kdp) system, which catalyzes the hydrolysis of ATP coupled with the electrogenic transport of potassium into the cytoplasm. This subunit binds the periplasmic potassium ions and delivers the ions to the membrane domain of KdpB through an intramembrane tunnel. This Polynucleobacter asymbioticus (strain DSM 18221 / CIP 109841 / QLW-P1DMWA-1) (Polynucleobacter necessarius subsp. asymbioticus) protein is Potassium-transporting ATPase potassium-binding subunit.